The sequence spans 115 residues: Holo-[acyl-carrier-protein] synthase (115 aa).

Positions 6 and 51 each coordinate Mg(2+).

Belongs to the P-Pant transferase superfamily. AcpS family. Mg(2+) is required as a cofactor.

Its subcellular location is the cytoplasm. It catalyses the reaction apo-[ACP] + CoA = holo-[ACP] + adenosine 3',5'-bisphosphate + H(+). Transfers the 4'-phosphopantetheine moiety from coenzyme A to a Ser of acyl-carrier-protein. The sequence is that of Holo-[acyl-carrier-protein] synthase from Campylobacter jejuni (strain RM1221).